The following is a 379-amino-acid chain: MSATLALTEQLIARASVTPDDQHCQQIMTERLAALGFECETIASHGVTNLWAVKRGTDGRDGKLLAFAGHTDVVPTGPLEQWTSPPFIPAHRDGKLYGRGAADMKTSLAAFVVASEEFVAVHPDHRGTIAFLITSDEEGPATDGTVKVVELLQARGERLDYCIVGEPTSTAELGDVVKNGRRGSMSGELVVKGVQGHIAYPHLAKNPIHLLAPALAELAAEQWDAGNEYFPPTTWQVSNLHAGTGATNVTPGHADLLFNFRFSTASTVEGLQARVHAILDKHGLEYTLKWSVSGLPFLTPRGELSGALEHAIRTETGITTELSTTGGTSDGRFIARICPQVIEFGPPNGSIHKIDEHIEVRFVDPLKNVYRRVLEQLIA.

His70 provides a ligand contact to Zn(2+). Asp72 is a catalytic residue. Residue Asp103 participates in Zn(2+) binding. The active-site Proton acceptor is the Glu137. Residues Glu138, Glu166, and His352 each coordinate Zn(2+).

Belongs to the peptidase M20A family. DapE subfamily. As to quaternary structure, homodimer. Zn(2+) serves as cofactor. It depends on Co(2+) as a cofactor.

The catalysed reaction is N-succinyl-(2S,6S)-2,6-diaminopimelate + H2O = (2S,6S)-2,6-diaminopimelate + succinate. The protein operates within amino-acid biosynthesis; L-lysine biosynthesis via DAP pathway; LL-2,6-diaminopimelate from (S)-tetrahydrodipicolinate (succinylase route): step 3/3. Functionally, catalyzes the hydrolysis of N-succinyl-L,L-diaminopimelic acid (SDAP), forming succinate and LL-2,6-diaminopimelate (DAP), an intermediate involved in the bacterial biosynthesis of lysine and meso-diaminopimelic acid, an essential component of bacterial cell walls. The sequence is that of Succinyl-diaminopimelate desuccinylase from Burkholderia orbicola (strain MC0-3).